The primary structure comprises 346 residues: N(4)-(beta-N-acetylglucosaminyl)-L-asparaginase (346 aa).

Residues 1-23 (MERKSNLSLLLLLLVLGMPLVRG) form the signal peptide. Asn38 carries N-linked (GlcNAc...) asparagine glycosylation. Intrachain disulfides connect Cys64–Cys69 and Cys163–Cys179. Residue Thr206 is the Nucleophile of the active site. Residues 234 to 237 (RVGD) and 257 to 260 (TGDG) contribute to the substrate site. Residues Cys286 and Cys306 are joined by a disulfide bond. Residue Asn310 is glycosylated (N-linked (GlcNAc...) asparagine). Residues Cys317 and Cys345 are joined by a disulfide bond.

This sequence belongs to the Ntn-hydrolase family. In terms of assembly, heterotetramer of two alpha and two beta chains arranged as a dimer of alpha/beta heterodimers. Cleaved into an alpha and beta chain by autocatalysis; this activates the enzyme. The N-terminal residue of the beta subunit is responsible for the nucleophile hydrolase activity. In terms of processing, N-glycosylated.

Its subcellular location is the lysosome. The enzyme catalyses N(4)-(beta-N-acetyl-D-glucosaminyl)-L-asparagine + H2O = N-acetyl-beta-D-glucosaminylamine + L-aspartate + H(+). In terms of biological role, cleaves the GlcNAc-Asn bond which joins oligosaccharides to the peptide of asparagine-linked glycoproteins. The polypeptide is N(4)-(beta-N-acetylglucosaminyl)-L-asparaginase (Aga) (Mus musculus (Mouse)).